A 198-amino-acid chain; its full sequence is Probable GTP-binding protein EngB (198 aa).

An EngB-type G domain is found at 21-195 (NFSEVAFLGR…EDIIINQTLG (175 aa)). GTP contacts are provided by residues 29 to 36 (GRSNVGKS), 56 to 60 (GKTQL), 81 to 84 (DLPG), 151 to 154 (TKCD), and 174 to 176 (VSN). Residues Ser36 and Thr58 each coordinate Mg(2+).

Belongs to the TRAFAC class TrmE-Era-EngA-EngB-Septin-like GTPase superfamily. EngB GTPase family. The cofactor is Mg(2+).

Necessary for normal cell division and for the maintenance of normal septation. The protein is Probable GTP-binding protein EngB of Campylobacter jejuni subsp. jejuni serotype O:23/36 (strain 81-176).